The chain runs to 1066 residues: DNA-directed RNA polymerase subunit beta (1066 aa).

It belongs to the RNA polymerase beta chain family. As to quaternary structure, in plastids the minimal PEP RNA polymerase catalytic core is composed of four subunits: alpha, beta, beta', and beta''. When a (nuclear-encoded) sigma factor is associated with the core the holoenzyme is formed, which can initiate transcription.

It is found in the plastid. It localises to the chloroplast. It catalyses the reaction RNA(n) + a ribonucleoside 5'-triphosphate = RNA(n+1) + diphosphate. Its function is as follows. DNA-dependent RNA polymerase catalyzes the transcription of DNA into RNA using the four ribonucleoside triphosphates as substrates. This is DNA-directed RNA polymerase subunit beta from Psilotum nudum (Whisk fern).